Here is a 335-residue protein sequence, read N- to C-terminus: Leukocyte immunoglobulin-like receptor subfamily B member 4A (335 aa).

An N-terminal signal peptide occupies residues 1-23 (MIAMLTVLLYLGLILEPRTAVQA). The Extracellular portion of the chain corresponds to 24 to 238 (GHLPKPIIWA…TEDGLETYQK (215 aa)). 2 Ig-like C2-type domains span residues 42–125 (YTSV…ENPS) and 124–212 (PSLS…KPSN). The cysteines at positions 49 and 98 are disulfide-linked. Asparagine 133 and asparagine 191 each carry an N-linked (GlcNAc...) asparagine glycan. Residues cysteine 144 and cysteine 196 are joined by a disulfide bond. A helical transmembrane segment spans residues 239 to 260 (ILIGVLVSFLLLFFLLLFLILI). Over 261–335 (GYQYGHKKKA…CIRTQEQNNS (75 aa)) the chain is Cytoplasmic. Short sequence motifs (ITIM motif) lie at residues 298 to 303 (IVYAQV) and 320 to 325 (VTYAQL).

In terms of assembly, interacts (when tyrosine phosphorylated) with SH2 domain-containing phosphatases PTPN6/SHP-1 and PTPN11/SHP-2; interaction with PTPN6 enhances inhibition of mast cell activation. Post-translationally, tyrosine phosphorylated. In terms of tissue distribution, expressed on mast cells and natural killer cells (at protein level). Expressed on neutrophils (at protein level). Expressed on eosinophils (at protein level). Expressed on dendritic cells (at protein level). Expressed on memory and marginal zone B cells (at protein level). Expressed on CD8 T cells (at protein level). Expressed in the uterus of pregnant mice where it is detected at day 4.0 of pregnancy with levels dropping at day 4.5. Highly expressed in the luminal epithelium of uterine endometrium with lower levels in the glandular epithelium.

The protein localises to the cell membrane. Functionally, inhibitory receptor involved in the down-regulation of the immune response. Receptor for FN1. Receptor for integrin ITGAV/ITGB3. Inhibits IgE-mediated mast cell activation, at least in part through interaction with ITGAV/ITGB3. Also inhibits KITLG/SCF-mediated mast cell activation. Through interaction with ITGAV/ITGB3, inhibits antibody production by memory and marginal zone B cells, probably by suppressing their differentiation into plasma cells. Inhibits IFNG production by CD8 T cells, CD4 T cells and natural killer cells. Inhibits antigen presentation by dendritic cells to T cells, preventing T cell activation. Inhibits lipopolysaccharide-mediated neutrophil-dependent vascular injury. Suppresses the allergic inflammatory response by inhibiting infiltration of neutrophils and eosinophils and preventing mast cell degranulation. Inhibits lysis by natural killer cells. The protein is Leukocyte immunoglobulin-like receptor subfamily B member 4A of Mus musculus (Mouse).